The primary structure comprises 199 residues: Rho-related protein racG (199 aa).

Residues A13, G15, K16, T17, C18, Y32, and T35 each contribute to the GTP site. T17 contacts Mg(2+). 2 consecutive short sequence motifs (switch) follow at residues 26-37 and 57-75; these read NAFPNEYIPTVF and DTAG…YPST. T35 contacts Mg(2+). K116, D118, and A159 together coordinate GTP. C196 carries the cysteine methyl ester modification. The S-geranylgeranyl cysteine moiety is linked to residue C196. Positions 197–199 are cleaved as a propeptide — removed in mature form; sequence SLF.

It belongs to the small GTPase superfamily. Rho family. Mg(2+) is required as a cofactor.

The protein resides in the cell membrane. It localises to the cytoplasm. It is found in the cytoskeleton. The catalysed reaction is GTP + H2O = GDP + phosphate + H(+). With respect to regulation, regulated by guanine nucleotide exchange factors (GEFs) which promote the exchange of bound GDP for free GTP, GTPase activating proteins (GAPs) which increase the GTP hydrolysis activity, and GDP dissociation inhibitors which inhibit the dissociation of the nucleotide from the GTPase. Small GTPase which cycles between active GTP-bound and inactive GDP-bound states. Involved in actin cytoskeleton remodeling during capping of surface receptors and uroid formation. This is Rho-related protein racG from Entamoeba histolytica (strain ATCC 30459 / HM-1:IMSS / ABRM).